The chain runs to 584 residues: Arginine--tRNA ligase (584 aa).

The 'HIGH' region signature appears at 125 to 135 (PNIAKEMHVGH).

It belongs to the class-I aminoacyl-tRNA synthetase family. As to quaternary structure, monomer.

The protein resides in the cytoplasm. The enzyme catalyses tRNA(Arg) + L-arginine + ATP = L-arginyl-tRNA(Arg) + AMP + diphosphate. In Thermosynechococcus vestitus (strain NIES-2133 / IAM M-273 / BP-1), this protein is Arginine--tRNA ligase.